The sequence spans 3063 residues: Genome polyprotein (3063 aa).

The 144-residue stretch at 141 to 284 (KLTEGQMNHL…QSILNSMIQF (144 aa)) folds into the Peptidase S30 domain. Active-site for P1 proteinase activity residues include histidine 192, aspartate 201, and serine 235. The Involved in interaction with stylet and aphid transmission signature appears at 334–337 (KITC). The Involved in virions binding and aphid transmission motif lies at 592–594 (PTK). Residues 618–740 (LYIAKQGYCY…ESDIKHYRVG (123 aa)) form the Peptidase C6 domain. Active-site for helper component proteinase activity residues include cysteine 626 and histidine 699. The 153-residue stretch at 1229–1381 (DIAHSEHLDF…TQQPVKLIVE (153 aa)) folds into the Helicase ATP-binding domain. 1242 to 1249 (GAVGSGKS) provides a ligand contact to ATP. The DECH box motif lies at 1331 to 1334 (DECH). The Helicase C-terminal domain occupies 1400 to 1559 (DVVQFGSNVL…NLPVMTGGVS (160 aa)). Residues 1884–1892 (RKKGKGKGT) carry the Nuclear localization signal motif. Residue tyrosine 1907 is modified to O-(5'-phospho-RNA)-tyrosine. The segment at 1949-1964 (KMVENDDIEMQALGSN) is interaction with host EIF4E. The Peptidase C4 domain occupies 2032–2250 (AKSLMRGLRD…VLWGPLKLKD (219 aa)). Catalysis depends on for nuclear inclusion protein A activity residues histidine 2077, aspartate 2112, and cysteine 2182. The RdRp catalytic domain maps to 2519 to 2643 (WVYCDADGSQ…AVNPEKESIL (125 aa)). The disordered stretch occupies residues 2798 to 2841 (NDTIDAGGSNKKDAKPEQGSIQPNPNKGKDKDVNAGTSGTHTVP). Threonine 3046 is subject to Phosphothreonine.

This sequence belongs to the potyviridae genome polyprotein family. Interacts with host eIF4E protein (via cap-binding region); this interaction mediates the translation of the VPg-viral RNA conjugates. Part of a complex that comprises VPg, RNA, host EIF4E and EIF4G; this interaction mediates the translation of the VPg-viral RNA conjugates. Interaction is possible in susceptible hosts but impaired in resistant plants: the VPg of strain LYE84 interacts with tomato eIF4E1 and eIF4E2 as well as with the Capsicum annuum eIF4E1 susceptible allele pvr2(+) but not with resistant alleles pvr2(1), pvr2(2), pvr2(3), pvr2(4), pvr2(5), pvr2(6), pvr2(7), pvr2(8) and pvr2(9), the VPg of strain SON41 interacts with C.annuum eIF4E1 susceptible alleles pvr2(+), pvr2(1), pvr2(2), pvr2(3) and pvr2(4) but not with resistant alleles pvr2(5), pvr2(6), pvr2(7), pvr2(8) and pvr2(9), the VPg of strain LYE90 interacts only with tomato eIF4E1. Post-translationally, VPg is uridylylated by the polymerase and is covalently attached to the 5'-end of the genomic RNA. This uridylylated form acts as a nucleotide-peptide primer for the polymerase. In terms of processing, potyviral RNA is expressed as two polyproteins which undergo post-translational proteolytic processing. Genome polyprotein is processed by NIa-pro, P1 and HC-pro proteinases resulting in the production of at least ten individual proteins. P3N-PIPO polyprotein is cleaved by P1 and HC-pro proteinases resulting in the production of three individual proteins. The P1 proteinase and the HC-pro cleave only their respective C-termini autocatalytically. 6K1 is essential for proper proteolytic separation of P3 from CI.

It localises to the host cytoplasmic vesicle. The protein resides in the host nucleus. The protein localises to the virion. It carries out the reaction RNA(n) + a ribonucleoside 5'-triphosphate = RNA(n+1) + diphosphate. The enzyme catalyses Hydrolyzes glutaminyl bonds, and activity is further restricted by preferences for the amino acids in P6 - P1' that vary with the species of potyvirus, e.g. Glu-Xaa-Xaa-Tyr-Xaa-Gln-|-(Ser or Gly) for the enzyme from tobacco etch virus. The natural substrate is the viral polyprotein, but other proteins and oligopeptides containing the appropriate consensus sequence are also cleaved.. The catalysed reaction is Hydrolyzes a Gly-|-Gly bond at its own C-terminus, commonly in the sequence -Tyr-Xaa-Val-Gly-|-Gly, in the processing of the potyviral polyprotein.. In terms of biological role, required for aphid transmission and also has proteolytic activity. Only cleaves a Gly-Gly dipeptide at its own C-terminus. Interacts with virions and aphid stylets. Acts as a suppressor of RNA-mediated gene silencing, also known as post-transcriptional gene silencing (PTGS), a mechanism of plant viral defense that limits the accumulation of viral RNAs. May have RNA-binding activity. Functionally, has helicase activity. It may be involved in replication. Indispensable for virus replication. Reduces the abundance of host transcripts related to jasmonic acid biosynthesis therefore altering the host defenses. In order to increase its own stability, decreases host protein degradation pathways. Its function is as follows. Indispensable for virus replication. In terms of biological role, mediates the cap-independent, EIF4E-dependent translation of viral genomic RNAs. Binds to the cap-binding site of host EIF4E and thus interferes with the host EIF4E-dependent mRNA export and translation. VPg-RNA directly binds EIF4E and is a template for transcription. Also forms trimeric complexes with EIF4E-EIF4G, which are templates for translation. Functionally, has RNA-binding and proteolytic activities. An RNA-dependent RNA polymerase that plays an essential role in the virus replication. Its function is as follows. Involved in aphid transmission, cell-to-cell and systemis movement, encapsidation of the viral RNA and in the regulation of viral RNA amplification. The polypeptide is Genome polyprotein (Potato virus Y (strain N) (PVY)).